The following is an 81-amino-acid chain: Cytotoxin 4a (81 aa).

Residues 1–21 (MKTLLLTLVVVTIVCLDLGYT) form the signal peptide. Disulfide bonds link Cys-24–Cys-42, Cys-35–Cys-59, Cys-63–Cys-74, and Cys-75–Cys-80.

Belongs to the three-finger toxin family. Short-chain subfamily. Type IA cytotoxin sub-subfamily. Monomer in solution; Homodimer and oligomer in the presence of negatively charged lipids forming a pore with a size ranging between 20 and 30 Angstroms. As to expression, expressed by the venom gland.

The protein localises to the secreted. It is found in the target cell membrane. Shows cytolytic activity on many different cells by forming pore in lipid membranes. In vivo, increases heart rate or kills the animal by cardiac arrest. In addition, it binds to heparin with high affinity, interacts with Kv channel-interacting protein 1 (KCNIP1) in a calcium-independent manner, and binds to integrin alpha-V/beta-3 (ITGAV/ITGB3) with moderate affinity. The chain is Cytotoxin 4a from Naja sputatrix (Malayan spitting cobra).